The following is a 362-amino-acid chain: Protein-glutamate methylesterase/protein-glutamine glutaminase (362 aa).

One can recognise a Response regulatory domain in the interval 5-122; it reads KVLCVDDSAL…RDGMLDYSEK (118 aa). Aspartate 56 carries the post-translational modification 4-aspartylphosphate. The CheB-type methylesterase domain occupies 163–355; the sequence is LLSTEKLIIV…RRVMARLSSM (193 aa). Active-site residues include serine 175, histidine 201, and aspartate 297.

The protein belongs to the CheB family. In terms of processing, phosphorylated by CheA. Phosphorylation of the N-terminal regulatory domain activates the methylesterase activity.

The protein localises to the cytoplasm. It catalyses the reaction [protein]-L-glutamate 5-O-methyl ester + H2O = L-glutamyl-[protein] + methanol + H(+). It carries out the reaction L-glutaminyl-[protein] + H2O = L-glutamyl-[protein] + NH4(+). Its function is as follows. Involved in chemotaxis. Part of a chemotaxis signal transduction system that modulates chemotaxis in response to various stimuli. Catalyzes the demethylation of specific methylglutamate residues introduced into the chemoreceptors (methyl-accepting chemotaxis proteins or MCP) by CheR. Also mediates the irreversible deamidation of specific glutamine residues to glutamic acid. This chain is Protein-glutamate methylesterase/protein-glutamine glutaminase, found in Paraburkholderia xenovorans (strain LB400).